Consider the following 345-residue polypeptide: GTP 3',8-cyclase (345 aa).

Residues 10–236 enclose the Radical SAM core domain; that stretch reads SHGRPLGVLR…QCVSSHWPLD (227 aa). A GTP-binding site is contributed by R19. The [4Fe-4S] cluster site is built by C26 and C30. Y32 provides a ligand contact to S-adenosyl-L-methionine. C33 is a [4Fe-4S] cluster binding site. R65 lines the GTP pocket. Position 69 (G69) interacts with S-adenosyl-L-methionine. T98 provides a ligand contact to GTP. Position 123 (S123) interacts with S-adenosyl-L-methionine. Residue K172 coordinates GTP. S-adenosyl-L-methionine is bound at residue M206. 2 residues coordinate [4Fe-4S] cluster: C269 and C272. Residue 274 to 276 coordinates GTP; it reads RIR. C286 is a binding site for [4Fe-4S] cluster.

The protein belongs to the radical SAM superfamily. MoaA family. In terms of assembly, monomer and homodimer. It depends on [4Fe-4S] cluster as a cofactor.

The catalysed reaction is GTP + AH2 + S-adenosyl-L-methionine = (8S)-3',8-cyclo-7,8-dihydroguanosine 5'-triphosphate + 5'-deoxyadenosine + L-methionine + A + H(+). Its pathway is cofactor biosynthesis; molybdopterin biosynthesis. In terms of biological role, catalyzes the cyclization of GTP to (8S)-3',8-cyclo-7,8-dihydroguanosine 5'-triphosphate. The polypeptide is GTP 3',8-cyclase (Synechococcus sp. (strain CC9902)).